The following is a 488-amino-acid chain: Eukaryotic translation initiation factor 3 subunit L (488 aa).

2 disordered regions span residues methionine 1 to glutamine 34 and serine 427 to glutamate 449. Positions glutamine 7 to proline 16 are enriched in basic and acidic residues. Residues aspartate 17 to methionine 27 are compositionally biased toward acidic residues. The PCI domain maps to aspartate 256–isoleucine 450. Residues leucine 431–glutamine 440 show a composition bias toward basic and acidic residues.

The protein belongs to the eIF-3 subunit L family. Component of the eukaryotic translation initiation factor 3 (eIF-3) complex.

The protein resides in the cytoplasm. Functionally, component of the eukaryotic translation initiation factor 3 (eIF-3) complex, which is involved in protein synthesis of a specialized repertoire of mRNAs and, together with other initiation factors, stimulates binding of mRNA and methionyl-tRNAi to the 40S ribosome. The eIF-3 complex specifically targets and initiates translation of a subset of mRNAs involved in cell proliferation. The sequence is that of Eukaryotic translation initiation factor 3 subunit L from Phaeosphaeria nodorum (strain SN15 / ATCC MYA-4574 / FGSC 10173) (Glume blotch fungus).